We begin with the raw amino-acid sequence, 230 residues long: MPLSAQQLAAQKNLSYVLAEKLAQRILKGEYEPGTILPGEIELGEQFGVSRTAVREAVKTLTAKGMVLPRPRIGTRVMPQSNWNFLDQELLTWWMTEENFHQVIDHFLVMRICLEPQACLLAATVGTAEQKAHLNTLMAEMAALKENFRRERWIEVDMAWHEHIYEMSANPFLTSFASLFHSVYHTYFTSITSDTVIKLDLHQAIVDAIIQSDGDAAFKACQALLRSPDK.

The 69-residue stretch at K12–Q80 folds into the HTH gntR-type domain. The H-T-H motif DNA-binding region spans E40–K59.

This is an uncharacterized protein from Escherichia coli (strain K12).